A 61-amino-acid polypeptide reads, in one-letter code: Small ribosomal subunit protein uS14 (61 aa).

Zn(2+) contacts are provided by C24, C27, C40, and C43.

Belongs to the universal ribosomal protein uS14 family. Zinc-binding uS14 subfamily. Part of the 30S ribosomal subunit. Contacts proteins S3 and S10. It depends on Zn(2+) as a cofactor.

Binds 16S rRNA, required for the assembly of 30S particles and may also be responsible for determining the conformation of the 16S rRNA at the A site. The chain is Small ribosomal subunit protein uS14 from Helicobacter pylori (strain J99 / ATCC 700824) (Campylobacter pylori J99).